A 250-amino-acid polypeptide reads, in one-letter code: Insertion sequence IS232 putative ATP-binding protein (250 aa).

108 to 115 (GPSGVGKT) is a binding site for ATP.

The protein belongs to the IS21/IS1162 putative ATP-binding protein family.

This chain is Insertion sequence IS232 putative ATP-binding protein, found in Bacillus thuringiensis subsp. berliner.